Reading from the N-terminus, the 353-residue chain is Beta-agarase B (353 aa).

A signal peptide spans 1–17; it reads MYLIYLRLVFCCALLLG. Cysteine 18 carries the N-palmitoyl cysteine lipid modification. A lipid anchor (S-diacylglycerol cysteine) is attached at cysteine 18. Positions 30–58 are disordered; the sequence is LPVEQEQEQETEQEGEPEESSEQDLVEEV. The span at 32 to 58 shows a compositional bias: acidic residues; that stretch reads VEQEQEQETEQEGEPEESSEQDLVEEV. The region spanning 58–353 is the GH16 domain; it reads VDWKDIPVPA…WIRIYKPVEK (296 aa). Residues 105-107 and aspartate 181 contribute to the substrate site; that span reads YHN. Residue glutamate 184 is the Nucleophile of the active site. Glutamate 189 functions as the Proton donor in the catalytic mechanism. Substrate contacts are provided by histidine 215, arginine 219, aspartate 224, glutamine 226, and glutamate 308.

Belongs to the glycosyl hydrolase 16 family. Homodimer.

It localises to the cell outer membrane. It catalyses the reaction Hydrolysis of (1-&gt;4)-beta-D-galactosidic linkages in agarose, giving the tetramer as the predominant product.. Cleaves the beta-1,4-linkages between beta-D-galactose and alpha-L-3,6-anhydro-galactose residues in agarose. Cleaves agarose in a random manner with retention of the anomeric-bond configuration, producing beta-anomers that give rise progressively to alpha-anomers when mutarotation takes place. Also tolerant to hybrid substrates containing C6-sulfate groups at the -4, +1, and +3 positions. This Zobellia galactanivorans (strain DSM 12802 / CCUG 47099 / CIP 106680 / NCIMB 13871 / Dsij) protein is Beta-agarase B (agaB).